The primary structure comprises 101 residues: Small ribosomal subunit protein uS14c (101 aa).

Belongs to the universal ribosomal protein uS14 family. As to quaternary structure, part of the 30S ribosomal subunit.

Its subcellular location is the plastid. Functionally, binds 16S rRNA, required for the assembly of 30S particles. The sequence is that of Small ribosomal subunit protein uS14c from Helicosporidium sp. subsp. Simulium jonesii (Green alga).